We begin with the raw amino-acid sequence, 1055 residues long: DNA-directed RNA polymerase subunit beta' (1055 aa).

Cys60, Cys62, Cys75, and Cys78 together coordinate Zn(2+). 3 residues coordinate Mg(2+): Asp449, Asp451, and Asp453. Residues Cys818, Cys892, Cys899, and Cys902 each contribute to the Zn(2+) site.

It belongs to the RNA polymerase beta' chain family. In terms of assembly, the RNAP catalytic core consists of 2 alpha, 1 beta, 1 beta' and 1 omega subunit. When a sigma factor is associated with the core the holoenzyme is formed, which can initiate transcription. Mg(2+) serves as cofactor. It depends on Zn(2+) as a cofactor.

The enzyme catalyses RNA(n) + a ribonucleoside 5'-triphosphate = RNA(n+1) + diphosphate. Functionally, DNA-dependent RNA polymerase catalyzes the transcription of DNA into RNA using the four ribonucleoside triphosphates as substrates. This chain is DNA-directed RNA polymerase subunit beta', found in Pediococcus acidilactici.